The primary structure comprises 344 residues: L-threonine 3-dehydrogenase (344 aa).

Zn(2+) is bound at residue Cys38. Catalysis depends on charge relay system residues Thr40 and His43. Zn(2+)-binding residues include His63, Glu64, Cys93, Cys96, Cys99, and Cys107. NAD(+) contacts are provided by residues Ile175, Asp195, Arg200, 263–265 (LGI), and 287–288 (IY).

The protein belongs to the zinc-containing alcohol dehydrogenase family. As to quaternary structure, homotetramer. It depends on Zn(2+) as a cofactor.

The protein resides in the cytoplasm. The enzyme catalyses L-threonine + NAD(+) = (2S)-2-amino-3-oxobutanoate + NADH + H(+). Its pathway is amino-acid degradation; L-threonine degradation via oxydo-reductase pathway; glycine from L-threonine: step 1/2. Catalyzes the NAD(+)-dependent oxidation of L-threonine to 2-amino-3-ketobutyrate. In Deinococcus deserti (strain DSM 17065 / CIP 109153 / LMG 22923 / VCD115), this protein is L-threonine 3-dehydrogenase.